Reading from the N-terminus, the 174-residue chain is Male-enhanced antigen 1 (174 aa).

2 disordered regions span residues 1-83 and 95-123; these read MAAV…DGAA and HLPDPPLESEDEDEEGAAALSSHSSIPMD. 3 stretches are compositionally biased toward acidic residues: residues 38–48, 65–82, and 101–110; these read SSEEPEEEQEE, PEQEEVELAPVGEGEDGA, and LESEDEDEEG. Serine 103 bears the Phosphoserine mark.

In terms of tissue distribution, highly expressed in testis. Transcripts can be found in primary and secondary spermatocytes, and spermatids, but the protein itself is only detected in spermatids. No expression in Leydig cells, spermatogonia, or sperm. Very weak expression in the heart, kidney, spleen, thymus and ovary.

In terms of biological role, may play an important role in spermatogenesis and/or testis development. The sequence is that of Male-enhanced antigen 1 (Mea1) from Mus musculus (Mouse).